A 214-amino-acid polypeptide reads, in one-letter code: Thiamine-phosphate synthase (214 aa).

4-amino-2-methyl-5-(diphosphooxymethyl)pyrimidine-binding positions include glutamine 37–lysine 41 and asparagine 73. The Mg(2+) site is built by aspartate 74 and aspartate 93. Serine 112 serves as a coordination point for 4-amino-2-methyl-5-(diphosphooxymethyl)pyrimidine. Threonine 139 to serine 141 lines the 2-[(2R,5Z)-2-carboxy-4-methylthiazol-5(2H)-ylidene]ethyl phosphate pocket. Lysine 142 is a 4-amino-2-methyl-5-(diphosphooxymethyl)pyrimidine binding site. 2-[(2R,5Z)-2-carboxy-4-methylthiazol-5(2H)-ylidene]ethyl phosphate-binding positions include glycine 171 and isoleucine 191–serine 192.

Belongs to the thiamine-phosphate synthase family. It depends on Mg(2+) as a cofactor.

The catalysed reaction is 2-[(2R,5Z)-2-carboxy-4-methylthiazol-5(2H)-ylidene]ethyl phosphate + 4-amino-2-methyl-5-(diphosphooxymethyl)pyrimidine + 2 H(+) = thiamine phosphate + CO2 + diphosphate. It catalyses the reaction 2-(2-carboxy-4-methylthiazol-5-yl)ethyl phosphate + 4-amino-2-methyl-5-(diphosphooxymethyl)pyrimidine + 2 H(+) = thiamine phosphate + CO2 + diphosphate. The enzyme catalyses 4-methyl-5-(2-phosphooxyethyl)-thiazole + 4-amino-2-methyl-5-(diphosphooxymethyl)pyrimidine + H(+) = thiamine phosphate + diphosphate. The protein operates within cofactor biosynthesis; thiamine diphosphate biosynthesis; thiamine phosphate from 4-amino-2-methyl-5-diphosphomethylpyrimidine and 4-methyl-5-(2-phosphoethyl)-thiazole: step 1/1. Condenses 4-methyl-5-(beta-hydroxyethyl)thiazole monophosphate (THZ-P) and 2-methyl-4-amino-5-hydroxymethyl pyrimidine pyrophosphate (HMP-PP) to form thiamine monophosphate (TMP). This is Thiamine-phosphate synthase from Listeria monocytogenes serovar 1/2a (strain ATCC BAA-679 / EGD-e).